A 376-amino-acid polypeptide reads, in one-letter code: Erythronate-4-phosphate dehydrogenase (376 aa).

Residues serine 45 and threonine 67 each coordinate substrate. Aspartate 147 contributes to the NAD(+) binding site. Arginine 209 is an active-site residue. Aspartate 233 contributes to the NAD(+) binding site. Glutamate 238 is a catalytic residue. Histidine 255 (proton donor) is an active-site residue. Glycine 258 is a binding site for NAD(+). Tyrosine 259 is a binding site for substrate.

This sequence belongs to the D-isomer specific 2-hydroxyacid dehydrogenase family. PdxB subfamily. In terms of assembly, homodimer.

It is found in the cytoplasm. It carries out the reaction 4-phospho-D-erythronate + NAD(+) = (R)-3-hydroxy-2-oxo-4-phosphooxybutanoate + NADH + H(+). Its pathway is cofactor biosynthesis; pyridoxine 5'-phosphate biosynthesis; pyridoxine 5'-phosphate from D-erythrose 4-phosphate: step 2/5. Functionally, catalyzes the oxidation of erythronate-4-phosphate to 3-hydroxy-2-oxo-4-phosphonooxybutanoate. The protein is Erythronate-4-phosphate dehydrogenase of Shewanella halifaxensis (strain HAW-EB4).